The sequence spans 204 residues: NADH-quinone oxidoreductase subunit C (204 aa).

The protein belongs to the complex I 30 kDa subunit family. In terms of assembly, NDH-1 is composed of 14 different subunits. Subunits NuoB, C, D, E, F, and G constitute the peripheral sector of the complex.

It is found in the cell inner membrane. The catalysed reaction is a quinone + NADH + 5 H(+)(in) = a quinol + NAD(+) + 4 H(+)(out). In terms of biological role, NDH-1 shuttles electrons from NADH, via FMN and iron-sulfur (Fe-S) centers, to quinones in the respiratory chain. The immediate electron acceptor for the enzyme in this species is believed to be ubiquinone. Couples the redox reaction to proton translocation (for every two electrons transferred, four hydrogen ions are translocated across the cytoplasmic membrane), and thus conserves the redox energy in a proton gradient. This Polaromonas naphthalenivorans (strain CJ2) protein is NADH-quinone oxidoreductase subunit C.